The chain runs to 262 residues: Small ribosomal subunit protein uS2 (262 aa).

The segment at 236-262 is disordered; it reads AGGAAEAPAAEDVQTEEAAAPEADSAE.

This sequence belongs to the universal ribosomal protein uS2 family.

This is Small ribosomal subunit protein uS2 from Psychrobacter sp. (strain PRwf-1).